The chain runs to 596 residues: Elongation factor 4 (596 aa).

The tr-type G domain occupies 2-184 (KQIRNFSIIA…VIVAKIPPPE (183 aa)). Residues 14-19 (DHGKST) and 131-134 (NKID) each bind GTP.

This sequence belongs to the TRAFAC class translation factor GTPase superfamily. Classic translation factor GTPase family. LepA subfamily.

Its subcellular location is the cell inner membrane. It carries out the reaction GTP + H2O = GDP + phosphate + H(+). In terms of biological role, required for accurate and efficient protein synthesis under certain stress conditions. May act as a fidelity factor of the translation reaction, by catalyzing a one-codon backward translocation of tRNAs on improperly translocated ribosomes. Back-translocation proceeds from a post-translocation (POST) complex to a pre-translocation (PRE) complex, thus giving elongation factor G a second chance to translocate the tRNAs correctly. Binds to ribosomes in a GTP-dependent manner. The sequence is that of Elongation factor 4 from Shewanella baltica (strain OS155 / ATCC BAA-1091).